The sequence spans 398 residues: Putative FBD-associated F-box protein At5g56700 (398 aa).

The region spanning 1 to 47 (MAKISDLSDELLVKILSFLPTKEAVSTSCLSKQWEFLWMWLSKLEFY) is the F-box domain. Positions 340 to 388 (WKNNKSSVPKCLLESLETFEFAGYIGTPEERDFLSYIFKHARCLKSSSI) constitute an FBD domain.

This is Putative FBD-associated F-box protein At5g56700 from Arabidopsis thaliana (Mouse-ear cress).